Consider the following 598-residue polypeptide: Kinetochore-associated protein KNL-2 homolog (598 aa).

The 93-residue stretch at 19–111 (VVLRDWWLIK…IFGFPPCWER (93 aa)) folds into the SANTA domain. 2 stretches are compositionally biased toward basic and acidic residues: residues 335 to 344 (AKSSKPEKKG) and 371 to 381 (KSAENKRKIDA). Disordered stretches follow at residues 335 to 403 (AKSS…NNAK), 445 to 500 (KESL…EEAE), 520 to 542 (PEKK…QKRS), and 572 to 598 (KDGS…LKIK). Residues 383 to 392 (KLQSPTSNVA) show a composition bias toward polar residues. Over residues 527–539 (QKTNAASTDSLGQ) the composition is skewed to polar residues. The tract at residues 538-572 (GQKRSRSGRVLVSSLEFWRNQIPVYDMDRNLIQVK) is required for localization at centromeres.

This sequence belongs to the KNL2 family. Expressed in shoot apical meristem, leaf primordia, basal parts of emerging leaves, inflorescence meristems, young inflorescences, developing flower buds, developing sepals and pistils, styles and young siliques.

The protein localises to the nucleus. Its subcellular location is the nucleoplasm. The protein resides in the nuclear body. It is found in the nucleolus. It localises to the chromosome. The protein localises to the centromere. Functionally, involved in recognition of centromeres and centromeric localization of the centromere-specific histone CENH3. Required for normal progression of mitosis and meiosis. May play a role in the determination of the epigenetic status of centromeres. Binds DNA and RNA in vitro. This is Kinetochore-associated protein KNL-2 homolog from Arabidopsis thaliana (Mouse-ear cress).